Reading from the N-terminus, the 111-residue chain is Cytochrome c3, 26 kDa (111 aa).

Heme c is bound by residues histidine 30, histidine 33, cysteine 38, cysteine 41, histidine 42, histidine 43, cysteine 54, cysteine 59, histidine 60, histidine 77, cysteine 86, cysteine 89, histidine 90, cysteine 105, cysteine 108, and histidine 109.

Homodimer. Heme c is required as a cofactor.

It localises to the periplasm. Participates in sulfate respiration coupled with phosphorylation by transferring electrons from the enzyme dehydrogenase to ferredoxin. The protein is Cytochrome c3, 26 kDa of Desulfomicrobium norvegicum (strain DSM 1741 / NCIMB 8310) (Desulfovibrio baculatus (strain Norway 4)).